The following is a 173-amino-acid chain: RNA pyrophosphohydrolase (173 aa).

The Nudix hydrolase domain maps to 11-164 (PYRRCVGVVV…KKHVYRKVVS (154 aa)). A Nudix box motif is present at residues 52-73 (GGIDEGEEPLDAACRELYEETG).

Belongs to the Nudix hydrolase family. RppH subfamily. A divalent metal cation serves as cofactor.

In terms of biological role, accelerates the degradation of transcripts by removing pyrophosphate from the 5'-end of triphosphorylated RNA, leading to a more labile monophosphorylated state that can stimulate subsequent ribonuclease cleavage. In Bartonella quintana (strain Toulouse) (Rochalimaea quintana), this protein is RNA pyrophosphohydrolase.